The chain runs to 423 residues: TPR repeat-containing protein YpiA (423 aa).

TPR repeat units lie at residues Asp-33–Glu-66, Thr-67–Tyr-100, Pro-135–Ile-168, Val-171–Pro-204, Thr-238–Asn-271, Lys-272–Phe-305, Val-306–Asp-339, Pro-340–Asp-373, and Arg-374–Asn-407.

Interacts with the RNA polymerase core.

This is TPR repeat-containing protein YpiA (ypiA) from Bacillus subtilis (strain 168).